A 341-amino-acid chain; its full sequence is Biotin synthase (341 aa).

The Radical SAM core domain maps to 40-267 (AEIQVSTLLS…RSMVRLSAGR (228 aa)). Cys-55, Cys-59, and Cys-62 together coordinate [4Fe-4S] cluster. Positions 99, 130, 190, and 262 each coordinate [2Fe-2S] cluster.

Belongs to the radical SAM superfamily. Biotin synthase family. As to quaternary structure, homodimer. It depends on [4Fe-4S] cluster as a cofactor. [2Fe-2S] cluster is required as a cofactor.

The enzyme catalyses (4R,5S)-dethiobiotin + (sulfur carrier)-SH + 2 reduced [2Fe-2S]-[ferredoxin] + 2 S-adenosyl-L-methionine = (sulfur carrier)-H + biotin + 2 5'-deoxyadenosine + 2 L-methionine + 2 oxidized [2Fe-2S]-[ferredoxin]. The protein operates within cofactor biosynthesis; biotin biosynthesis; biotin from 7,8-diaminononanoate: step 2/2. Catalyzes the conversion of dethiobiotin (DTB) to biotin by the insertion of a sulfur atom into dethiobiotin via a radical-based mechanism. The chain is Biotin synthase from Xylella fastidiosa (strain M12).